The primary structure comprises 417 residues: uncharacterized protein (417 aa).

Disordered regions lie at residues F44–R83 and V325–E346. Residues S54 to S64 are compositionally biased toward low complexity. The segment covering A65–N76 has biased composition (polar residues). The segment covering Q326–R339 has biased composition (basic residues). Residues F362 to V382 traverse the membrane as a helical segment.

The protein resides in the membrane. This is an uncharacterized protein from Caenorhabditis elegans.